The chain runs to 331 residues: Cytosolic 5'-nucleotidase 3A (331 aa).

D83 serves as the catalytic Nucleophile. Positions 83 and 85 each coordinate Mg(2+). Residue D85 is the Proton donor of the active site. E130 contributes to the CMP binding site. Residues E130 and S151 each coordinate N(7)-methyl-GMP. Substrate contacts are provided by residues 198-199 (SA) and K247. D272 is a Mg(2+) binding site.

It belongs to the pyrimidine 5'-nucleotidase family.

Its subcellular location is the cytoplasm. The catalysed reaction is N(7)-methyl-GMP + H2O = N(7)-methylguanosine + phosphate. It carries out the reaction a ribonucleoside 5'-phosphate + H2O = a ribonucleoside + phosphate. Functionally, nucleotidase which shows specific activity towards cytidine monophosphate (CMP) and 7-methylguanosine monophosphate (m(7)GMP). CMP seems to be the preferred substrate. The sequence is that of Cytosolic 5'-nucleotidase 3A (NT5C3A) from Gallus gallus (Chicken).